The following is a 300-amino-acid chain: F-box protein SKIP1 (300 aa).

The region spanning 11–52 (LAPEILINIISRLTIQELWTGPMFVQKSWLTVCRDPYLWSIF) is the F-box; degenerate domain.

Part of a SCF (ASK-cullin-F-box) protein ligase complex. Interacts with SKP1A/ASK1 and SKP1B/ASK2.

Its subcellular location is the nucleus. Its pathway is protein modification; protein ubiquitination. In terms of biological role, component of SCF(ASK-cullin-F-box) E3 ubiquitin ligase complexes, which may mediate the ubiquitination and subsequent proteasomal degradation of target proteins. The polypeptide is F-box protein SKIP1 (SKIP1) (Arabidopsis thaliana (Mouse-ear cress)).